Reading from the N-terminus, the 300-residue chain is Cation-efflux pump FieF (300 aa).

The next 4 helical transmembrane spans lie at 11–31, 40–60, 81–101, and 114–134; these read LAAVSATAVALVLFVMKVFAW, LASLVDSLVDIAASLVNLLVV, LAALAQSMFISGSALFLILTG, and PEVGMWVTLIALVATLLLVSF. Positions 45 and 49 each coordinate Zn(2+). The Zn(2+) site is built by H153 and D157. 2 consecutive transmembrane segments (helical) span residues 156 to 176 and 182 to 202; these read SDLLMNGAILVALALSWKGIT and FALGIGVYILYSALRMGYDAV.

This sequence belongs to the cation diffusion facilitator (CDF) transporter (TC 2.A.4) family. FieF subfamily. As to quaternary structure, homodimer.

The protein resides in the cell inner membrane. It carries out the reaction Zn(2+)(in) + H(+)(out) = Zn(2+)(out) + H(+)(in). The catalysed reaction is Cd(2+)(in) + H(+)(out) = Cd(2+)(out) + H(+)(in). It catalyses the reaction Fe(2+)(in) + H(+)(out) = Fe(2+)(out) + H(+)(in). Its function is as follows. Divalent metal cation transporter which exports Zn(2+), Cd(2+) and possibly Fe(2+). May be involved in zinc and iron detoxification by efflux. In Pectobacterium atrosepticum (strain SCRI 1043 / ATCC BAA-672) (Erwinia carotovora subsp. atroseptica), this protein is Cation-efflux pump FieF.